Here is a 445-residue protein sequence, read N- to C-terminus: N-succinylarginine dihydrolase (445 aa).

Substrate contacts are provided by residues 19–28 (AGLSYGNVAS), N110, and 137–138 (HR). The active site involves E174. R214 lines the substrate pocket. The active site involves H250. The substrate site is built by D252 and N363. Catalysis depends on C369, which acts as the Nucleophile.

Belongs to the succinylarginine dihydrolase family. In terms of assembly, homodimer.

The catalysed reaction is N(2)-succinyl-L-arginine + 2 H2O + 2 H(+) = N(2)-succinyl-L-ornithine + 2 NH4(+) + CO2. Its pathway is amino-acid degradation; L-arginine degradation via AST pathway; L-glutamate and succinate from L-arginine: step 2/5. Functionally, catalyzes the hydrolysis of N(2)-succinylarginine into N(2)-succinylornithine, ammonia and CO(2). This chain is N-succinylarginine dihydrolase, found in Shewanella loihica (strain ATCC BAA-1088 / PV-4).